We begin with the raw amino-acid sequence, 854 residues long: Envelope glycoprotein B (854 aa).

A signal peptide spans 1 to 30 (MSKNWFPLLCASVLVVYVSIASSSTGTASG). Over 31-723 (AVTPTSPTEN…EGVVGFIKNP (693 aa)) the chain is Virion surface. 3 N-linked (GlcNAc...) asparagine; by host glycosylation sites follow: Asn40, Asn48, and Asn60. 5 disulfides stabilise this stretch: Cys69–Cys524, Cys86–Cys480, Cys160–Cys225, Cys317–Cys364, and Cys546–Cys583. The segment at 127–133 (SYSFIRE) is involved in fusion and/or binding to host membrane. The N-linked (GlcNAc...) asparagine; by host glycan is linked to Asn183. The involved in fusion and/or binding to host membrane stretch occupies residues 212–219 (GSTWLYTT). N-linked (GlcNAc...) asparagine; by host glycosylation is found at Asn256, Asn275, Asn314, Asn356, Asn378, Asn382, Asn390, Asn423, Asn426, Asn442, Asn558, and Asn595. Hydrophobic membrane proximal region regions lie at residues 669–721 (VEGK…GFIK) and 700–720 (VAIG…VGFI). Residues 724–744 (FGSFTVILFLLAVLGVIYLIY) traverse the membrane as a helical segment. The Intravirion portion of the chain corresponds to 745 to 854 (MRQKRAYEKP…YQKIQNEYEV (110 aa)).

Belongs to the herpesviridae glycoprotein B family. As to quaternary structure, homotrimer; disulfide-linked. Binds to heparan sulfate proteoglycans. Interacts with gH/gL heterodimer. In terms of processing, a proteolytic cleavage by host furin generates two subunits that remain linked by disulfide bonds.

Its subcellular location is the virion membrane. It is found in the host cell membrane. It localises to the host endosome membrane. The protein localises to the host Golgi apparatus membrane. Envelope glycoprotein that forms spikes at the surface of virion envelope. Essential for the initial attachment to heparan sulfate moieties of the host cell surface proteoglycans. Involved in fusion of viral and cellular membranes leading to virus entry into the host cell. Following initial binding to its host receptors, membrane fusion is mediated by the fusion machinery composed at least of gB and the heterodimer gH/gL. May be involved in the fusion between the virion envelope and the outer nuclear membrane during virion egress. The sequence is that of Envelope glycoprotein B from Macaca mulatta (Rhesus macaque).